Consider the following 1648-residue polypeptide: Cortactin-binding protein 2 (1648 aa).

5 disordered regions span residues 1–26 (MATD…TAEA), 200–250 (EEKK…EEAH), 322–439 (PLTV…PGLN), 451–476 (GNAN…PTSR), and 492–608 (ALSR…PSID). Positions 119-274 (KMQERMSAQL…MEQMKKGSDG (156 aa)) form a coiled coil. Basic and acidic residues-rich tracts occupy residues 200-218 (EEKK…EKQR) and 225-250 (QLEK…EEAH). Polar residues-rich tracts occupy residues 330–342 (STGS…NTKG) and 372–392 (LPSS…APDL). Over residues 393-415 (SNSTPSTPSSTAPAAAQTPGTAP) the composition is skewed to low complexity. Over residues 492 to 503 (ALSRFTSPQAGA) the composition is skewed to polar residues. Arg-495 bears the Asymmetric dimethylarginine mark. ANK repeat units lie at residues 699–729 (GRPT…DINY), 733–762 (DGHS…RVDA), 766–795 (NGFT…NINH), 799–828 (GGQT…DRSI), 832–861 (DGWT…RAHG), and 901–931 (EGWT…EPER). The interval 1438 to 1492 (SGAWRKVNTSPRKKPGHFSSPTWNKPDPKREGMRNKTIPHLNTNRNSSLSKQQSL) is disordered. The segment covering 1477-1492 (HLNTNRNSSLSKQQSL) has biased composition (polar residues). Ser-1510 is modified (phosphoserine). Positions 1522 to 1648 (SMCSSKSESD…KHEQVEKPNK (127 aa)) are disordered. Positions 1528 to 1547 (SESDISKIADSRDDLRKFDS) are enriched in basic and acidic residues. Polar residues-rich tracts occupy residues 1548 to 1557 (SRTNPGTSAP) and 1571 to 1584 (PPSS…SNSK). Residues 1609–1623 (SQNTKRNSSSSNTRQ) are compositionally biased toward low complexity. Over residues 1630–1648 (SKEENWTLDKHEQVEKPNK) the composition is skewed to basic and acidic residues.

In terms of assembly, interacts with CTTN/cortactin SH3 domain. Interacts with STRN, STRN4/zinedin and MOB4/phocein; this interactions mediate the association with the STRIPAK core complex and may regulate dendritic spine distribution of the STRIPAK complex in hippocampal neurons. Activation of glutamate receptors weakens the interaction with STRN and STRN4. Isoform 2 is predominantly expressed in brain (at protein level). In the brain, expressed at high levels in hypothalamus and striatum and at lower levels in cerebellum and cortex.

Its subcellular location is the cytoplasm. The protein localises to the cell cortex. The protein resides in the cell projection. It is found in the dendritic spine. Functionally, regulates the dendritic spine distribution of CTTN/cortactin in hippocampal neurons, and thus controls dendritic spinogenesis and dendritic spine maintenance. Associates with the striatin-interacting phosphatase and kinase (STRIPAK) core complex to regulate dendritic spine distribution of the STRIPAK complex in hippocampal neurons. The chain is Cortactin-binding protein 2 (Cttnbp2) from Mus musculus (Mouse).